We begin with the raw amino-acid sequence, 224 residues long: Uracil-DNA glycosylase 2 (224 aa).

Catalysis depends on Asp64, which acts as the Proton acceptor.

It belongs to the uracil-DNA glycosylase (UDG) superfamily. UNG family.

It localises to the cytoplasm. The catalysed reaction is Hydrolyzes single-stranded DNA or mismatched double-stranded DNA and polynucleotides, releasing free uracil.. Its function is as follows. Excises uracil residues from the DNA which can arise as a result of misincorporation of dUMP residues by DNA polymerase or due to deamination of cytosine. This is Uracil-DNA glycosylase 2 from Listeria innocua serovar 6a (strain ATCC BAA-680 / CLIP 11262).